The following is a 608-amino-acid chain: Probable Ufm1-specific protease 2 (608 aa).

Residues Cys-441, Asp-565, and His-567 contribute to the active site.

Belongs to the peptidase C78 family.

Functionally, thiol protease which recognizes and hydrolyzes the peptide bond at the C-terminal Gly of UFM1, a ubiquitin-like modifier protein bound to a number of target proteins. Does not hydrolyze SUMO1 or ISG15 ubiquitin-like proteins. This Drosophila pseudoobscura pseudoobscura (Fruit fly) protein is Probable Ufm1-specific protease 2.